Here is a 509-residue protein sequence, read N- to C-terminus: UDP-N-acetylmuramoyl-L-alanyl-D-glutamate--2,6-diaminopimelate ligase (509 aa).

Ser32 contacts UDP-N-acetyl-alpha-D-muramoyl-L-alanyl-D-glutamate. Gly117–Thr123 serves as a coordination point for ATP. Residues Thr159–Thr160, Ser186, Gln192, and Arg194 each bind UDP-N-acetyl-alpha-D-muramoyl-L-alanyl-D-glutamate. Residue Lys226 is modified to N6-carboxylysine. Residues Arg401, Asp425–Arg428, Gly476, and Glu480 each bind meso-2,6-diaminopimelate. A Meso-diaminopimelate recognition motif motif is present at residues Asp425–Arg428.

This sequence belongs to the MurCDEF family. MurE subfamily. The cofactor is Mg(2+). Carboxylation is probably crucial for Mg(2+) binding and, consequently, for the gamma-phosphate positioning of ATP.

It is found in the cytoplasm. It catalyses the reaction UDP-N-acetyl-alpha-D-muramoyl-L-alanyl-D-glutamate + meso-2,6-diaminopimelate + ATP = UDP-N-acetyl-alpha-D-muramoyl-L-alanyl-gamma-D-glutamyl-meso-2,6-diaminopimelate + ADP + phosphate + H(+). Its pathway is cell wall biogenesis; peptidoglycan biosynthesis. In terms of biological role, catalyzes the addition of meso-diaminopimelic acid to the nucleotide precursor UDP-N-acetylmuramoyl-L-alanyl-D-glutamate (UMAG) in the biosynthesis of bacterial cell-wall peptidoglycan. This Prochlorococcus marinus (strain NATL1A) protein is UDP-N-acetylmuramoyl-L-alanyl-D-glutamate--2,6-diaminopimelate ligase.